The chain runs to 400 residues: Hyaluronidase (400 aa).

An N-terminal signal peptide occupies residues 1–19; sequence MQTILVLTTFLSAWFLAVG. 5 disulfide bridges follow: Cys31/Cys319, Cys196/Cys209, Cys344/Cys355, Cys349/Cys384, and Cys386/Cys395. The Proton donor role is filled by Glu120. 2 N-linked (GlcNAc...) asparagine glycosylation sites follow: Asn129 and Asn166. Asn243 and Asn275 each carry an N-linked (GlcNAc...) asparagine glycan. In terms of domain architecture, EGF-like spans 340–396; the sequence is NVARCSKQACSGRGRCTWPKDTSVIAWKFLVEKEDYDFYLGDIECKCVEGYEGRYCE.

This sequence belongs to the glycosyl hydrolase 56 family. As to quaternary structure, monomer. As to expression, expressed by the venom gland.

The protein localises to the secreted. It carries out the reaction Random hydrolysis of (1-&gt;4)-linkages between N-acetyl-beta-D-glucosamine and D-glucuronate residues in hyaluronate.. Spider venom endo-hyaluronidase that is able to degrade purified hyaluronic acid (HA) and chondroitin sulfate (CS). Has no activity on dermatan sulfate (DS) and heparan sulfate (HS). Also increases the dermonecrotic effect of the dermonecrotic toxin (AC P0CE80), when injected in rabbit skin, supporting the hypothesis that venom hyaluronidases are spreading factors. This Loxosceles intermedia (Brown spider) protein is Hyaluronidase.